The primary structure comprises 210 residues: S-norcoclaurine synthase (210 aa).

The N-terminal stretch at 1–19 (MMKMEVVFVFLMLLGTINC) is a signal peptide. 108-110 (YKE) is a binding site for dopamine. Lys-122 serves as the catalytic Proton donor. A (4-hydroxyphenyl)acetaldehyde-binding site is contributed by Asp-141.

This sequence belongs to the BetVI family. Concentration-dependent dimerization, but mainly monomeric at concentrations around 10 uM. As to expression, expressed most abundantly in the rhizomes and to a lesser extent in petioles, roots, leaves and flower buds.

It carries out the reaction (4-hydroxyphenyl)acetaldehyde + dopamine = (S)-norcoclaurine + H2O. In terms of biological role, involved in the biosynthesis of the common precursor of all benzylisoquinoline alkaloids such as morphine, sanguinarine, codeine or berberine. Condenses dopamine and 4-hydroxyphenylacetaldehyde. The sequence is that of S-norcoclaurine synthase from Thalictrum flavum subsp. glaucum (Yellow meadow rue).